A 457-amino-acid chain; its full sequence is Neuropeptide receptor npr-1 (457 aa).

The Extracellular portion of the chain corresponds to 1 to 22 (MEVENFTDCQVYWKVYPDPSQS). The chain crosses the membrane as a helical span at residues 23–43 (IYAIVPFLTVYLFLFFLGLFG). Topologically, residues 44–62 (NVTLIYVTCSHKALLSVQN) are cytoplasmic. The helical transmembrane segment at 63–83 (IFILNLAASDCMMCILSLPIT) threads the bilayer. Residues 84-100 (PITNVYKNWYFGNLLCH) lie on the Extracellular side of the membrane. A disulfide bridge links Cys-99 with Cys-178. A helical transmembrane segment spans residues 101–121 (LIPCIQGISIFVCTFSLGAIA). Residues 122–140 (LDRYILVVRPHSTPLSQRG) are Cytoplasmic-facing. Residues 141–161 (AFLTTVLLWILSFVVTLPYAF) form a helical membrane-spanning segment. At 162–193 (NMQMIEYTEERICGYFCTEKWESAKSRRAYTM) the chain is on the extracellular side. A helical membrane pass occupies residues 194–214 (IVMLAQFVVPFAVMAFCYANI). Residues 215 to 279 (VSVLSKRAQT…LQNRRTTSIL (65 aa)) lie on the Cytoplasmic side of the membrane. The chain crosses the membrane as a helical span at residues 280–300 (VTMVVWFGITWLPHNVISLII). The Extracellular segment spans residues 301–324 (EYDDTQSFFRLYGRDDYDISYLLN). A helical membrane pass occupies residues 325–345 (LFTHSIAMSNNVLNPVLYAWL). Over 346 to 457 (NPSFRQLVIK…IEFSVNDTLV (112 aa)) the chain is Cytoplasmic.

It belongs to the G-protein coupled receptor 1 family. Expressed in neurons, including neurons in the head, the ventral nerve cord, and the preanal ganglion.

The protein resides in the membrane. Functionally, G-protein coupled receptor for FARP(FMRFamide related peptide) neuropeptides. Activated by FARP neuropeptides flp-18 and flp-21. Plays a role in modulating social and feeding behavior. Required to modulate locomotion quiescence during the sleep-like state called lethargus, which occurs during molting between larval and adult stages, in part by regulating touch sensitivity. This chain is Neuropeptide receptor npr-1, found in Caenorhabditis elegans.